A 430-amino-acid chain; its full sequence is Enolase (430 aa).

Gln164 serves as a coordination point for (2R)-2-phosphoglycerate. Catalysis depends on Glu208, which acts as the Proton donor. Residues Asp245, Glu288, and Asp315 each coordinate Mg(2+). The (2R)-2-phosphoglycerate site is built by Lys340, Arg369, Ser370, and Lys391. Lys340 serves as the catalytic Proton acceptor.

Belongs to the enolase family. Requires Mg(2+) as cofactor.

It localises to the cytoplasm. It is found in the secreted. The protein resides in the cell surface. The enzyme catalyses (2R)-2-phosphoglycerate = phosphoenolpyruvate + H2O. Its pathway is carbohydrate degradation; glycolysis; pyruvate from D-glyceraldehyde 3-phosphate: step 4/5. Its function is as follows. Catalyzes the reversible conversion of 2-phosphoglycerate (2-PG) into phosphoenolpyruvate (PEP). It is essential for the degradation of carbohydrates via glycolysis. The sequence is that of Enolase from Thermococcus gammatolerans (strain DSM 15229 / JCM 11827 / EJ3).